The chain runs to 698 residues: Adhesion G protein-coupled receptor F4 (698 aa).

Positions 1 to 19 (MKPWIAMVCCLVFFLTTEC) are cleaved as a signal peptide. Residues 20–409 (SHSKPKTHRK…VKNTILNHIT (390 aa)) are Extracellular-facing. N61, N168, N213, N268, N290, N344, and N375 each carry an N-linked (GlcNAc...) asparagine glycan. Residues 250 to 401 (RISHSSSEHS…SILMSSKPVK (152 aa)) form the GAIN-B domain. 2 disulfide bridges follow: C353–C380 and C368–C382. Positions 353–401 (CVSWDPATGQWDESPCTVMSDINSTVKCRCRHTKAVTSFSILMSSKPVK) are GPS. Residues 410–430 (FIGLSISIFSLVLCLVIEAIV) form a helical membrane-spanning segment. At 431 to 444 (WSRVVVTEISYMRH) the chain is on the cytoplasmic side. The helical transmembrane segment at 445-465 (VCIVNIAVSLLTANVWFIIGS) threads the bilayer. A glycan (N-linked (GlcNAc...) asparagine) is linked at N466. At 466–486 (NFSANVQEDHKWCVAVTFLCH) the chain is on the extracellular side. Residues 487-507 (FFFLSLFFWMLFKALLIVYGI) form a helical membrane-spanning segment. Topologically, residues 508 to 518 (LVVFRRMMKSR) are cytoplasmic. A helical transmembrane segment spans residues 519–539 (MMAIGFAIGYGCPLVIAVITV). Over 540-566 (TVTEPGEGYTRKDACWLNWNQTKALFA) the chain is Extracellular. Residue N559 is glycosylated (N-linked (GlcNAc...) asparagine). A helical transmembrane segment spans residues 567–587 (FAIPALAIVAVNLLVVLAVAI). Topologically, residues 588 to 611 (NTQRPLIGSSKSQDMAIVFRISKN) are cytoplasmic. The chain crosses the membrane as a helical span at residues 612–632 (VAILTPLLGLTWGFGLTTLLE). Topologically, residues 633-635 (GVH) are extracellular. Residues 636 to 656 (LVFHIIFALLNAFQGFFILLF) traverse the membrane as a helical segment. The Cytoplasmic portion of the chain corresponds to 657–698 (GTIMDHKIRDALRMRVSSLKGKSRAAEKVSLSPANGSRILNR).

It belongs to the G-protein coupled receptor 2 family. Adhesion G-protein coupled receptor (ADGR) subfamily. As to expression, expressed in squamous epithelia.

It localises to the membrane. Functionally, orphan receptor. The sequence is that of Adhesion G protein-coupled receptor F4 (Adgrf4) from Mus musculus (Mouse).